The sequence spans 549 residues: Probable protein kinase UbiB (549 aa).

The 379-residue stretch at 123–501 (DFEDTPLASA…QQKAHKSNYL (379 aa)) folds into the Protein kinase domain. Residues 129-137 (LASASISQV) and Lys-152 contribute to the ATP site. Asp-287 serves as the catalytic Proton acceptor. 2 helical membrane-spanning segments follow: residues 498–518 (SNYL…LLNQ) and 520–540 (ATLW…VLGW).

The protein belongs to the ABC1 family. UbiB subfamily.

The protein localises to the cell inner membrane. The protein operates within cofactor biosynthesis; ubiquinone biosynthesis [regulation]. Functionally, is probably a protein kinase regulator of UbiI activity which is involved in aerobic coenzyme Q (ubiquinone) biosynthesis. The chain is Probable protein kinase UbiB from Shewanella piezotolerans (strain WP3 / JCM 13877).